Consider the following 662-residue polypeptide: Glycogen debranching enzyme (662 aa).

The Nucleophile role is filled by aspartate 338. Glutamate 373 acts as the Proton donor in catalysis.

It belongs to the glycosyl hydrolase 13 family.

The enzyme catalyses Hydrolysis of (1-&gt;6)-alpha-D-glucosidic linkages to branches with degrees of polymerization of three or four glucose residues in limit dextrin.. It functions in the pathway glycan degradation; glycogen degradation. Functionally, removes maltotriose and maltotetraose chains that are attached by 1,6-alpha-linkage to the limit dextrin main chain, generating a debranched limit dextrin. The polypeptide is Glycogen debranching enzyme (Yersinia pseudotuberculosis serotype I (strain IP32953)).